Reading from the N-terminus, the 136-residue chain is Large ribosomal subunit protein uL16 (136 aa).

The protein belongs to the universal ribosomal protein uL16 family. As to quaternary structure, part of the 50S ribosomal subunit.

Functionally, binds 23S rRNA and is also seen to make contacts with the A and possibly P site tRNAs. The sequence is that of Large ribosomal subunit protein uL16 from Serratia proteamaculans (strain 568).